A 188-amino-acid polypeptide reads, in one-letter code: UPF0301 protein Tcr_1827 (188 aa).

The protein belongs to the UPF0301 (AlgH) family.

This chain is UPF0301 protein Tcr_1827, found in Hydrogenovibrio crunogenus (strain DSM 25203 / XCL-2) (Thiomicrospira crunogena).